We begin with the raw amino-acid sequence, 173 residues long: Adenine phosphoribosyltransferase (173 aa).

Belongs to the purine/pyrimidine phosphoribosyltransferase family. In terms of assembly, homodimer.

The protein resides in the cytoplasm. The enzyme catalyses AMP + diphosphate = 5-phospho-alpha-D-ribose 1-diphosphate + adenine. It participates in purine metabolism; AMP biosynthesis via salvage pathway; AMP from adenine: step 1/1. Its function is as follows. Catalyzes a salvage reaction resulting in the formation of AMP, that is energically less costly than de novo synthesis. The polypeptide is Adenine phosphoribosyltransferase (Chloroflexus aurantiacus (strain ATCC 29366 / DSM 635 / J-10-fl)).